The chain runs to 390 residues: MTNLNPRDVVIVDGVRSAMGKSKNGMFRNVRADSLSAELVRALVARNQFDVNEVEDLIWGCVNQTLEQGMNIGRNIVLLADLPKTVAGQTVNRLCGSSMQAIHTAAAQIATNQGDIFIIGGVEHMGHVGMMHGIDLNPEASKHYAKASNMMGLTAEMLGRMNGIGREEQDAFGVESHRRAWAATQEGRFKNEIVGVEGHDANGFKILCDIDEVIRPDANLEAFKALRPVFDPKGGTVTAATSSALSDGASAMLLMSAERAQALGLKPRAVIRSMAVAGCDAAIMGYGPVPATQKALKRAGLSVADIQTVELNEAFAAQGLSVLKGLGLYEKQDIVNLNGGAIALGHPLGCSGARITTTLLNVMEQQDTQIGLATMCIGLGQGIATVIERV.

Catalysis depends on cysteine 95, which acts as the Acyl-thioester intermediate. Catalysis depends on proton acceptor residues histidine 346 and cysteine 376.

It belongs to the thiolase-like superfamily. Thiolase family. Heterotetramer of two alpha chains (FadB) and two beta chains (FadA).

It localises to the cytoplasm. The enzyme catalyses an acyl-CoA + acetyl-CoA = a 3-oxoacyl-CoA + CoA. It participates in lipid metabolism; fatty acid beta-oxidation. Catalyzes the final step of fatty acid oxidation in which acetyl-CoA is released and the CoA ester of a fatty acid two carbons shorter is formed. The sequence is that of 3-ketoacyl-CoA thiolase from Acinetobacter baylyi (strain ATCC 33305 / BD413 / ADP1).